The primary structure comprises 341 residues: 4-hydroxythreonine-4-phosphate dehydrogenase (341 aa).

Thr-126 serves as a coordination point for substrate. 3 residues coordinate a divalent metal cation: His-161, His-206, and His-272. Residues Lys-280, Asn-289, and Arg-298 each coordinate substrate.

Belongs to the PdxA family. In terms of assembly, homodimer. The cofactor is a divalent metal cation.

It localises to the cytoplasm. It carries out the reaction 4-(phosphooxy)-L-threonine + NAD(+) = 3-amino-2-oxopropyl phosphate + CO2 + NADH. The protein operates within cofactor biosynthesis; pyridoxine 5'-phosphate biosynthesis; pyridoxine 5'-phosphate from D-erythrose 4-phosphate: step 4/5. Catalyzes the NAD(P)-dependent oxidation of 4-(phosphooxy)-L-threonine (HTP) into 2-amino-3-oxo-4-(phosphooxy)butyric acid which spontaneously decarboxylates to form 3-amino-2-oxopropyl phosphate (AHAP). This is 4-hydroxythreonine-4-phosphate dehydrogenase from Thermosynechococcus vestitus (strain NIES-2133 / IAM M-273 / BP-1).